We begin with the raw amino-acid sequence, 95 residues long: Aspartyl/glutamyl-tRNA(Asn/Gln) amidotransferase subunit C (95 aa).

It belongs to the GatC family. In terms of assembly, heterotrimer of A, B and C subunits.

It catalyses the reaction L-glutamyl-tRNA(Gln) + L-glutamine + ATP + H2O = L-glutaminyl-tRNA(Gln) + L-glutamate + ADP + phosphate + H(+). It carries out the reaction L-aspartyl-tRNA(Asn) + L-glutamine + ATP + H2O = L-asparaginyl-tRNA(Asn) + L-glutamate + ADP + phosphate + 2 H(+). Allows the formation of correctly charged Asn-tRNA(Asn) or Gln-tRNA(Gln) through the transamidation of misacylated Asp-tRNA(Asn) or Glu-tRNA(Gln) in organisms which lack either or both of asparaginyl-tRNA or glutaminyl-tRNA synthetases. The reaction takes place in the presence of glutamine and ATP through an activated phospho-Asp-tRNA(Asn) or phospho-Glu-tRNA(Gln). This Geobacter metallireducens (strain ATCC 53774 / DSM 7210 / GS-15) protein is Aspartyl/glutamyl-tRNA(Asn/Gln) amidotransferase subunit C.